The following is a 798-amino-acid chain: Integrin beta-7 (798 aa).

An N-terminal signal peptide occupies residues 1-19 (MVALPMVLVLLLVLSRGES). Residues 20 to 723 (ELDAKIPSTG…VRPQEKGADH (704 aa)) are Extracellular-facing. The PSI domain occupies 44-92 (SCQPAPSCQKCILSHPSCAWCKQLNFTASGEAEARRCARREELLARGCP). 7 disulfide bridges follow: cysteine 51–cysteine 476, cysteine 54–cysteine 80, cysteine 64–cysteine 91, cysteine 216–cysteine 223, cysteine 271–cysteine 311, cysteine 412–cysteine 428, and cysteine 448–cysteine 474. An N-linked (GlcNAc...) asparagine glycan is attached at asparagine 68. Residues 98–124 (EPRGQQEVLQDQPLSQGARGEGATQLA) form a disordered region. The VWFA domain maps to 150-389 (YPVDLYYLMD…QLIMDAYNSL (240 aa)). Mg(2+) contacts are provided by serine 161 and serine 163. Residues serine 163, aspartate 166, aspartate 167, and aspartate 198 each coordinate Ca(2+). Residues asparagine 254, aspartate 256, proline 258, and glutamate 259 each coordinate Ca(2+). Residue glutamate 259 coordinates Mg(2+). An N-linked (GlcNAc...) asparagine glycan is attached at asparagine 279. The Ca(2+) site is built by aspartate 289 and glutamate 373. N-linked (GlcNAc...) asparagine glycosylation is present at asparagine 434. Asparagine 477 carries an N-linked (GlcNAc...) asparagine glycan. 19 cysteine pairs are disulfide-bonded: cysteine 478–cysteine 497, cysteine 488–cysteine 500, cysteine 502–cysteine 511, cysteine 513–cysteine 545, cysteine 527–cysteine 543, cysteine 537–cysteine 548, cysteine 550–cysteine 559, cysteine 561–cysteine 582, cysteine 566–cysteine 580, cysteine 574–cysteine 585, cysteine 587–cysteine 596, cysteine 598–cysteine 621, cysteine 605–cysteine 619, cysteine 613–cysteine 624, cysteine 626–cysteine 635, cysteine 638–cysteine 641, cysteine 645–cysteine 688, cysteine 651–cysteine 670, and cysteine 654–cysteine 666. 4 consecutive I-EGF domains span residues 478–512 (CSDTQPQAPHCSDGQGHLQCGVCSCAPGRLGRLCE), 513–560 (CSVA…HLCE), 561–597 (CDDASCERHEGILCGGFGRCQCGVCHCHANRTGRACE), and 598–636 (CSGDMDSCISPEGGLCSGHGRCKCNRCQCLDGYYGALCD). N-linked (GlcNAc...) asparagine glycosylation is present at asparagine 531. Asparagine 590 carries an N-linked (GlcNAc...) asparagine glycan. Asparagine 665 and asparagine 674 each carry an N-linked (GlcNAc...) asparagine glycan. The helical transmembrane segment at 724-746 (TQAIVLGCVGGIVAVGLGLVLAY) threads the bilayer. Topologically, residues 747 to 798 (RLSVEIYDRREYSRFEKEQQQLNWKQDSNPLYKSAITTTINPRFQEADSPTL) are cytoplasmic. Tyrosine 778 is subject to Phosphotyrosine; by Tyr-kinases.

This sequence belongs to the integrin beta chain family. In terms of assembly, heterodimer of an alpha and a beta subunit. ITGB7/beta-7 associates with either ITGA4/alpha-4 or ITGAE/alpha-E. Integrin ITGA4/ITGB7 interacts with MADCAM1. Integrin ITGA4/ITGB7 interacts with VCAM1 and fibronectin. Interacts with FLNA (via filamin repeats 4, 9, 12, 17, 19, 21, and 23). (Microbial infection) May interact with HIV-1 gp120. As to expression, expressed in a variety of leukocyte lines.

Its subcellular location is the cell membrane. Integrin ITGA4/ITGB7 (alpha-4/beta-7) (Peyer patches-specific homing receptor LPAM-1) is an adhesion molecule that mediates lymphocyte migration and homing to gut-associated lymphoid tissue (GALT). Integrin ITGA4/ITGB7 interacts with the cell surface adhesion molecules MADCAM1 which is normally expressed by the vascular endothelium of the gastrointestinal tract. Also interacts with VCAM1 and fibronectin, an extracellular matrix component. It recognizes one or more domains within the alternatively spliced CS-1 region of fibronectin. Interactions involve the tripeptide L-D-T in MADCAM1, and L-D-V in fibronectin. Integrin ITGAE/ITGB7 (alpha-E/beta-7, HML-1) is a receptor for E-cadherin. In terms of biological role, (Microbial infection) Binds to HIV-1 gp120, thereby allowing the virus to enter GALT, which is thought to be the major trigger of AIDS disease. Interaction would involve a tripeptide L-D-I in HIV-1 gp120. The polypeptide is Integrin beta-7 (ITGB7) (Homo sapiens (Human)).